Consider the following 139-residue polypeptide: Large ribosomal subunit protein mL42 (139 aa).

The N-terminal 32 residues, 1–32, are a transit peptide targeting the mitochondrion; it reads MAVAAVKWVMSKRTILKHLFPVQNGALYCVCH.

Belongs to the mitochondrion-specific ribosomal protein mL42 family. Component of the mitochondrial ribosome large subunit (39S) which comprises a 16S rRNA and about 50 distinct proteins. Component of the mitochondrial ribosome small subunit (28S) which comprises a 12S rRNA and about 30 distinct proteins.

It is found in the mitochondrion. The protein is Large ribosomal subunit protein mL42 (MRPL42) of Pongo abelii (Sumatran orangutan).